The chain runs to 199 residues: Glycerol-3-phosphate acyltransferase (199 aa).

5 consecutive transmembrane segments (helical) span residues 3–23, 50–70, 78–98, 113–133, and 154–174; these read AAVW…GVLV, WGPA…AVLV, DWML…SVFL, LLFL…SVIL, and LALG…LLIF.

Belongs to the PlsY family. As to quaternary structure, probably interacts with PlsX.

It localises to the cell inner membrane. The catalysed reaction is an acyl phosphate + sn-glycerol 3-phosphate = a 1-acyl-sn-glycero-3-phosphate + phosphate. The protein operates within lipid metabolism; phospholipid metabolism. Its function is as follows. Catalyzes the transfer of an acyl group from acyl-phosphate (acyl-PO(4)) to glycerol-3-phosphate (G3P) to form lysophosphatidic acid (LPA). This enzyme utilizes acyl-phosphate as fatty acyl donor, but not acyl-CoA or acyl-ACP. This chain is Glycerol-3-phosphate acyltransferase, found in Thermus thermophilus (strain ATCC 27634 / DSM 579 / HB8).